Consider the following 657-residue polypeptide: Threonine--tRNA ligase (657 aa).

A TGS domain is found at 7–70 (ILAVIALTLP…TADAAIEIIT (64 aa)). The segment at 253 to 555 (DHRKLGAELE…LIEHTAGNFP (303 aa)) is catalytic. C351, H402, and H532 together coordinate Zn(2+).

The protein belongs to the class-II aminoacyl-tRNA synthetase family. As to quaternary structure, homodimer. The cofactor is Zn(2+).

The protein localises to the cytoplasm. The enzyme catalyses tRNA(Thr) + L-threonine + ATP = L-threonyl-tRNA(Thr) + AMP + diphosphate + H(+). Catalyzes the attachment of threonine to tRNA(Thr) in a two-step reaction: L-threonine is first activated by ATP to form Thr-AMP and then transferred to the acceptor end of tRNA(Thr). Also edits incorrectly charged L-seryl-tRNA(Thr). In Pelodictyon phaeoclathratiforme (strain DSM 5477 / BU-1), this protein is Threonine--tRNA ligase.